The chain runs to 199 residues: MTLTAYLLILTAYLLGSICSAIIFCRLAGLPDPRQNGSHNPGATNVLRNGGKLAAIGVLLFDTLKGSLPVLIAFRCDLSPSAIGLIGLAACLGHIFPIFFQFRGGKGVATAFGVFFSISIIASTTMICAWLIVFLLTRFSSLSAVIMALTAPFYIWCFKPEFTFPVALICCLLIYRHHDNIQRLWRGQEERLWDKLKSK.

5 helical membrane-spanning segments follow: residues 5-25 (AYLL…IIFC), 54-74 (AAIG…LIAF), 82-102 (AIGL…FFQF), 114-134 (VFFS…LIVF), and 154-174 (YIWC…CLLI).

Belongs to the PlsY family. Probably interacts with PlsX.

Its subcellular location is the cell inner membrane. It catalyses the reaction an acyl phosphate + sn-glycerol 3-phosphate = a 1-acyl-sn-glycero-3-phosphate + phosphate. The protein operates within lipid metabolism; phospholipid metabolism. Its function is as follows. Catalyzes the transfer of an acyl group from acyl-phosphate (acyl-PO(4)) to glycerol-3-phosphate (G3P) to form lysophosphatidic acid (LPA). This enzyme utilizes acyl-phosphate as fatty acyl donor, but not acyl-CoA or acyl-ACP. In Haemophilus ducreyi (strain 35000HP / ATCC 700724), this protein is Glycerol-3-phosphate acyltransferase.